The following is a 446-amino-acid chain: MTGDRRLFLVGLSHKSAPIDVRERVALTGDALKAALCELKAMEGVTEALVVSTCNRVEVFVHSDRPDAARRFFTERSPAAADHLYAKDGVEAVRHLFRVASSLDSMVVGEQQILGQVKEAYGLASAASAAGSYFSRLCNRAFATAKRVRTETEIGRGATSMSQVAVELVEKIFGRLEGRAILLVGAGKMGALSAKALAVLGADRILVTNRSPERGLALAAQVSGSYRGWEELQRLLGEADVVIVSTGAPTYVVTRESMHAAMKARRRRSICLIDLAVPRNVDPACAELSDVYAYDVDDMERVVATSKQARQGEAIRAEAIVEAEVMAFAKEREARAALPVLAQLRRHAERIARAEAERTLAQVGGKLDDKGRKSVEAMAQAIVNKLLHGPTSRLKEAASSGDSALPGAAAELFGIENETAGGERREGGAEGAAAAPGAGPVRSQGT.

Residues 53 to 56 (TCNR), serine 105, 110 to 112 (EQQ), and glutamine 116 contribute to the substrate site. The Nucleophile role is filled by cysteine 54. 185–190 (GAGKMG) contributes to the NADP(+) binding site. The interval 409–446 (AAELFGIENETAGGERREGGAEGAAAAPGAGPVRSQGT) is disordered. Low complexity predominate over residues 431–440 (GAAAAPGAGP).

The protein belongs to the glutamyl-tRNA reductase family. Homodimer.

The catalysed reaction is (S)-4-amino-5-oxopentanoate + tRNA(Glu) + NADP(+) = L-glutamyl-tRNA(Glu) + NADPH + H(+). The protein operates within porphyrin-containing compound metabolism; protoporphyrin-IX biosynthesis; 5-aminolevulinate from L-glutamyl-tRNA(Glu): step 1/2. In terms of biological role, catalyzes the NADPH-dependent reduction of glutamyl-tRNA(Glu) to glutamate 1-semialdehyde (GSA). The protein is Glutamyl-tRNA reductase 2 of Anaeromyxobacter dehalogenans (strain 2CP-C).